The following is a 333-amino-acid chain: T-cell surface glycoprotein CD1b1 (333 aa).

A signal peptide spans 1–17 (MLLVALALLAFLFPAGD). Residues 18 to 302 (TQNALQWPTS…LYWGHSISIG (285 aa)) are Extracellular-facing. N-linked (GlcNAc...) asparagine glycans are attached at residues asparagine 38, asparagine 75, and asparagine 146. 3 disulfide bridges follow: cysteine 120/cysteine 184, cysteine 149/cysteine 163, and cysteine 224/cysteine 279. The region spanning 197-295 (PDIQKQVKPD…LEGQDIILYW (99 aa)) is the Ig-like domain. Residues 303–323 (WIILAVLVPCLIVLVLFVLWF) traverse the membrane as a helical segment. The Cytoplasmic portion of the chain corresponds to 324-333 (YRRWSYEDIL). The Internalization signal motif lies at 329–332 (YEDI).

Heterodimer with B2M (beta-2-microglobulin). Interacts with saposin C.

The protein resides in the cell membrane. The protein localises to the endosome membrane. Its subcellular location is the lysosome membrane. Antigen-presenting protein that binds self and non-self lipid and glycolipid antigens and presents them to T-cell receptors on natural killer T-cells. The sequence is that of T-cell surface glycoprotein CD1b1 (CD1B1) from Cavia porcellus (Guinea pig).